Reading from the N-terminus, the 35-residue chain is Augerpeptide hheTx5 (35 aa).

Post-translationally, contains 4 disulfide bonds. As to expression, expressed by the venom duct.

It is found in the secreted. The polypeptide is Augerpeptide hheTx5 (Hastula hectica (Sea snail)).